We begin with the raw amino-acid sequence, 279 residues long: Putative methyltransferase Jann_4284 (279 aa).

This Jannaschia sp. (strain CCS1) protein is Putative methyltransferase Jann_4284.